The primary structure comprises 570 residues: Proline--tRNA ligase (570 aa).

Belongs to the class-II aminoacyl-tRNA synthetase family. ProS type 1 subfamily. As to quaternary structure, homodimer.

It is found in the cytoplasm. The catalysed reaction is tRNA(Pro) + L-proline + ATP = L-prolyl-tRNA(Pro) + AMP + diphosphate. Catalyzes the attachment of proline to tRNA(Pro) in a two-step reaction: proline is first activated by ATP to form Pro-AMP and then transferred to the acceptor end of tRNA(Pro). As ProRS can inadvertently accommodate and process non-cognate amino acids such as alanine and cysteine, to avoid such errors it has two additional distinct editing activities against alanine. One activity is designated as 'pretransfer' editing and involves the tRNA(Pro)-independent hydrolysis of activated Ala-AMP. The other activity is designated 'posttransfer' editing and involves deacylation of mischarged Ala-tRNA(Pro). The misacylated Cys-tRNA(Pro) is not edited by ProRS. This is Proline--tRNA ligase from Wolinella succinogenes (strain ATCC 29543 / DSM 1740 / CCUG 13145 / JCM 31913 / LMG 7466 / NCTC 11488 / FDC 602W) (Vibrio succinogenes).